The following is a 690-amino-acid chain: Tripartite terminase subunit 3 (690 aa).

The short motif at 226-233 (IPRRHGKT) is the Walker A motif element. Residues 321–326 (LLFVDE) carry the Walker B motif motif. Glutamate 326 (for ATPase activity) is an active-site residue. Active-site for nuclease activity residues include aspartate 481, glutamate 555, and aspartate 667.

It belongs to the herpesviridae TRM3 protein family. As to quaternary structure, interacts with the terminase subunits TRM1 and TRM2. Interacts with portal protein.

Its subcellular location is the host nucleus. Component of the molecular motor that translocates viral genomic DNA in empty capsid during DNA packaging. Forms a tripartite terminase complex together with TRM1 and TRM2 in the host cytoplasm. Once the complex reaches the host nucleus, it interacts with the capsid portal vertex. This portal forms a ring in which genomic DNA is translocated into the capsid. TRM3 carries an RNase H-like nuclease activity that plays an important role for the cleavage of concatemeric viral DNA into unit length genomes. In Homo sapiens (Human), this protein is Tripartite terminase subunit 3.